The following is a 632-amino-acid chain: MHGLLLAGLAAALPLGVAGLPARQQSGLSPRGIDINPYRFASMAKYSEHKATSQMVHSFSYSKDDDYVATATKLVKSTFPNMTFRTVKDHYIGTNGIGHVHFKQTAHGIDIDNADFNVNIGRDGKVFTFGNSFYEGEMPKTNPLTKRDFSDPVKALHGAIKTLKLPVKPQSAKAMPMKEAETFKFEGTSGALSDPMAKLVYIQKDGKLHLTWRVETDVGDNWLLSYVDSKETETVHNVVDYVASADYKVFAWGLNDPTEGQPTMIKDPWNTTGTGSPFTWHGDGQMDYTVTRGNNIAAQDNPSGGEQWENNYRPDSPELSFVYEYNEQMEPEQYKDFAITQLFYTTNTFHDVLYSLGFTEEAGNFQMNNNGKGGEGNDFAICNAQDGSGTNNANFATPPDGQNGRMRMYTWTTAQPSRDGDLEAGIVIHEYTHGLSNRLCGGPANSNCLTELEAGGMGEGWGDFYATAIRLKQDDTHDTDYTMGEWAANMQGGIREYPYSTNMQTNPYTYADVQGMDEVHGIGTVWATILYEVLWNLIDEHGMSKNIMPKFVNGAPSDGRNLAMKLVLDGMTLMPCNPNFMQARDAIIDADQALTNGQNKCALMKAFSKRGLGANYKHGKTRVNNFDMPADC.

A signal peptide spans 1 to 19 (MHGLLLAGLAAALPLGVAG). Residues 20 to 244 (LPARQQSGLS…VHNVVDYVAS (225 aa)) constitute a propeptide that is removed on maturation. N-linked (GlcNAc...) asparagine glycans are attached at residues Asn-81 and Asn-270. His-429 contacts Zn(2+). Glu-430 is a catalytic residue. Zn(2+) is bound at residue His-433.

The protein belongs to the peptidase M36 family. It depends on Zn(2+) as a cofactor.

The protein localises to the secreted. Its function is as follows. Secreted metalloproteinase probably acting as a virulence factor. The sequence is that of Probable extracellular metalloproteinase 2 (MEP2) from Arthroderma benhamiae (strain ATCC MYA-4681 / CBS 112371) (Trichophyton mentagrophytes).